The following is a 482-amino-acid chain: G patch domain-containing protein 2-like (482 aa).

Phosphoserine occurs at positions 31, 86, and 88. Residue Thr-91 is modified to Phosphothreonine. Lys-196 participates in a covalent cross-link: Glycyl lysine isopeptide (Lys-Gly) (interchain with G-Cter in SUMO2). The span at 198–214 (GRKERMECETDEQKQGS) shows a compositional bias: basic and acidic residues. Disordered stretches follow at residues 198-247 (GRKE…DDEQ) and 413-482 (KRKR…PGYS). Residues 220 to 230 (ECETSSVCSSS) are compositionally biased toward low complexity. Polar residues predominate over residues 439-450 (TPASQAPKSPSS). 2 positions are modified to phosphoserine: Ser-447 and Ser-449. The span at 456-469 (TSAAEKATDATTAT) shows a compositional bias: low complexity.

This Homo sapiens (Human) protein is G patch domain-containing protein 2-like (GPATCH2L).